The following is a 179-amino-acid chain: Large ribosomal subunit protein uL10 (179 aa).

A binds L7/L12 dimers region spans residues 137-179 (KEELYAMLVGRVKAPITGLVFALSGILRNLVYVLNAIKEKKSE).

Part of the ribosomal stalk of the 50S ribosomal subunit. The N-terminus interacts with L11 and 23S rRNA to form the base of the stalk. The C-terminus forms an elongated spine to which 3 L12 dimers bind in a sequential fashion forming a heptameric L10(L12)2(L12)2(L12)2 complex.

In terms of biological role, forms part of the ribosomal stalk, playing a central role in the interaction of the ribosome with GTP-bound translation factors (such as IF-2, EF-Tu, EF-G and RF3). This chain is Large ribosomal subunit protein uL10 (rplJ), found in Thermotoga maritima (strain ATCC 43589 / DSM 3109 / JCM 10099 / NBRC 100826 / MSB8).